The following is a 478-amino-acid chain: Pathogenicity cluster 5 protein d (478 aa).

The signal sequence occupies residues 1-19; sequence MQIQNLIAALAGMAVVAEA. 2 disordered regions span residues 35-89 and 299-400; these read RQNK…GQAN and NGGK…GGKG. Positions 38 to 64 are enriched in low complexity; that stretch reads KGGNNNNNNNNNNNNNNNNNKNNGGNN. Polar residues predominate over residues 65-89; the sequence is QLCLNPNNVQKGSQQAGTPKQGQAN. A compositionally biased stretch (gly residues) spans 316 to 326; that stretch reads NNDGGGGGNDG. Composition is skewed to low complexity over residues 327–348 and 379–393; these read GNNS…QNGA and TQAG…TNGN. Residues Asn328 and Asn332 are each glycosylated (N-linked (GlcNAc...) asparagine).

It is found in the secreted. In terms of biological role, secreted protein required for appressorial penetration of intact host epidermal cells and for pathogenicit, but not for subsequent biotrophic and necrotrophic colonization of leaves. This is Pathogenicity cluster 5 protein d from Colletotrichum graminicola (strain M1.001 / M2 / FGSC 10212) (Maize anthracnose fungus).